The following is a 48-amino-acid chain: Small, acid-soluble spore protein P (48 aa).

Basic and acidic residues predominate over residues 1–12 (MTNKNDSKDMRK). The interval 1-48 (MTNKNDSKDMRKNVSKGDNPGQPEPLDGSKKVKNRNHTRQKHNTSHDM) is disordered. Residues 31–48 (KVKNRNHTRQKHNTSHDM) are compositionally biased toward basic residues.

It belongs to the SspP family.

It is found in the spore core. The sequence is that of Small, acid-soluble spore protein P from Geobacillus thermodenitrificans (strain NG80-2).